Here is a 141-residue protein sequence, read N- to C-terminus: Prefoldin subunit alpha (141 aa).

The protein belongs to the prefoldin subunit alpha family. As to quaternary structure, heterohexamer of two alpha and four beta subunits.

It localises to the cytoplasm. In terms of biological role, molecular chaperone capable of stabilizing a range of proteins. Seems to fulfill an ATP-independent, HSP70-like function in archaeal de novo protein folding. This chain is Prefoldin subunit alpha (pfdA), found in Methanothermobacter thermautotrophicus (strain ATCC 29096 / DSM 1053 / JCM 10044 / NBRC 100330 / Delta H) (Methanobacterium thermoautotrophicum).